Here is a 642-residue protein sequence, read N- to C-terminus: G protein-coupled receptor kinase 1 (642 aa).

Residues 1-202 (MEIENIVANT…LEKRPVDKHT (202 aa)) form an N-terminal region. One can recognise an RGS domain in the interval 52–188 (YAFVVEKQPI…AESMYFHRFL (137 aa)). A Protein kinase domain is found at 203 to 470 (FRLYRVLGKG…AEEIRAHPFF (268 aa)). ATP is bound by residues 209 to 217 (LGKGGFGEV) and lysine 232. Catalysis depends on aspartate 328, which acts as the Proton acceptor. An AGC-kinase C-terminal domain is found at 480 to 545 (EPVPWKKMEA…GCVSIPWQSE (66 aa)). Residues 612–642 (VEQQQPPKTSTQTPAVRSSRAASASGRTLVI) form a disordered region. Over residues 614–636 (QQQPPKTSTQTPAVRSSRAASAS) the composition is skewed to low complexity.

Belongs to the protein kinase superfamily. AGC Ser/Thr protein kinase family. GPRK subfamily.

It catalyses the reaction [G-protein-coupled receptor] + ATP = [G-protein-coupled receptor]-phosphate + ADP + H(+). In terms of biological role, specifically phosphorylates the activated forms of G protein-coupled receptors. The polypeptide is G protein-coupled receptor kinase 1 (grk-1) (Caenorhabditis elegans).